The sequence spans 231 residues: 2-C-methyl-D-erythritol 4-phosphate cytidylyltransferase (231 aa).

This sequence belongs to the IspD/TarI cytidylyltransferase family. IspD subfamily.

The enzyme catalyses 2-C-methyl-D-erythritol 4-phosphate + CTP + H(+) = 4-CDP-2-C-methyl-D-erythritol + diphosphate. It functions in the pathway isoprenoid biosynthesis; isopentenyl diphosphate biosynthesis via DXP pathway; isopentenyl diphosphate from 1-deoxy-D-xylulose 5-phosphate: step 2/6. Catalyzes the formation of 4-diphosphocytidyl-2-C-methyl-D-erythritol from CTP and 2-C-methyl-D-erythritol 4-phosphate (MEP). This is 2-C-methyl-D-erythritol 4-phosphate cytidylyltransferase from Dictyoglomus thermophilum (strain ATCC 35947 / DSM 3960 / H-6-12).